The chain runs to 449 residues: tRNA modification GTPase MnmE (449 aa).

3 residues coordinate (6S)-5-formyl-5,6,7,8-tetrahydrofolate: Arg-24, Glu-85, and Arg-124. The region spanning 220 to 369 (GIRTAIAGPP…LEEAIIQAFS (150 aa)) is the TrmE-type G domain. Position 230 (Asn-230) interacts with K(+). GTP contacts are provided by residues 230–235 (NVGKSS), 249–255 (SNIAGTT), and 274–277 (DTAG). A Mg(2+)-binding site is contributed by Ser-234. Residues Ser-249, Ile-251, and Thr-254 each coordinate K(+). Thr-255 lines the Mg(2+) pocket. Lys-449 contributes to the (6S)-5-formyl-5,6,7,8-tetrahydrofolate binding site.

The protein belongs to the TRAFAC class TrmE-Era-EngA-EngB-Septin-like GTPase superfamily. TrmE GTPase family. Homodimer. Heterotetramer of two MnmE and two MnmG subunits. K(+) is required as a cofactor.

It localises to the cytoplasm. Its function is as follows. Exhibits a very high intrinsic GTPase hydrolysis rate. Involved in the addition of a carboxymethylaminomethyl (cmnm) group at the wobble position (U34) of certain tRNAs, forming tRNA-cmnm(5)s(2)U34. This chain is tRNA modification GTPase MnmE, found in Akkermansia muciniphila (strain ATCC BAA-835 / DSM 22959 / JCM 33894 / BCRC 81048 / CCUG 64013 / CIP 107961 / Muc).